Here is a 329-residue protein sequence, read N- to C-terminus: Epoxide hydrolase (329 aa).

The AB hydrolase-1 domain maps to 35-308 (PAVLFCHGFP…DNVGHWVQHE (274 aa)). The active-site Nucleophile is the Asp111. The Proton donor role is filled by Tyr242. Residue His303 is the Proton acceptor of the active site.

Belongs to the AB hydrolase superfamily. Epoxide hydrolase family. Homodimer.

The catalysed reaction is an epoxide + H2O = an ethanediol. The enzyme catalyses (R)-styrene oxide + H2O = (R)-styrene glycol. It carries out the reaction (S)-styrene oxide + H2O = (S)-styrene glycol. It catalyses the reaction 3,4-epoxy-1-cyclohexene + H2O = cyclohex-3-ene-1,2-diol. In terms of biological role, catalyzes the hydrolysis of various epoxides into diols. In vitro, shows the strongest activity toward aromatic and cyclic aliphatic epoxide compounds, since it shows strong activity toward (R)-styrene oxide, (S)-styrene oxide, and 3,4-epoxy-1-cyclohexene, but very weak activity toward (R)-epichlorohydrin, (S)-epichlorohydrin, and 1,2-epoxy-9-decene. The sequence is that of Epoxide hydrolase from Caballeronia sordidicola (Burkholderia sordidicola).